A 161-amino-acid polypeptide reads, in one-letter code: MKLSDIADNAGSRKKRMRIGRGIGSGKGKTGGRGGKGQTARSGVRINGFEGGQMPLHRRLPKRGFNNIFRVEFAEINLDRLQDAIDAGSIDANTTINAESLVKSGVVRRAKGGVRLLGRGEIKAKLTVEVHGASKSAIAAVEKAGGTVKILAPKKDEGEAA.

Positions 1-50 are disordered; that stretch reads MKLSDIADNAGSRKKRMRIGRGIGSGKGKTGGRGGKGQTARSGVRINGFE. Residues 21–37 show a composition bias toward gly residues; the sequence is RGIGSGKGKTGGRGGKG.

Belongs to the universal ribosomal protein uL15 family. Part of the 50S ribosomal subunit.

Functionally, binds to the 23S rRNA. This chain is Large ribosomal subunit protein uL15, found in Nitrobacter winogradskyi (strain ATCC 25391 / DSM 10237 / CIP 104748 / NCIMB 11846 / Nb-255).